A 159-amino-acid polypeptide reads, in one-letter code: 6,7-dimethyl-8-ribityllumazine synthase (159 aa).

Residues Trp26, 58 to 60, and 80 to 82 each bind 5-amino-6-(D-ribitylamino)uracil; these read AIE and VVI. 85-86 provides a ligand contact to (2S)-2-hydroxy-3-oxobutyl phosphate; it reads ET. The Proton donor role is filled by His88. Position 113 (Asn113) interacts with 5-amino-6-(D-ribitylamino)uracil. Arg127 contributes to the (2S)-2-hydroxy-3-oxobutyl phosphate binding site.

It belongs to the DMRL synthase family. In terms of assembly, homopentamer.

It catalyses the reaction (2S)-2-hydroxy-3-oxobutyl phosphate + 5-amino-6-(D-ribitylamino)uracil = 6,7-dimethyl-8-(1-D-ribityl)lumazine + phosphate + 2 H2O + H(+). Its pathway is cofactor biosynthesis; riboflavin biosynthesis; riboflavin from 2-hydroxy-3-oxobutyl phosphate and 5-amino-6-(D-ribitylamino)uracil: step 1/2. Functionally, catalyzes the formation of 6,7-dimethyl-8-ribityllumazine by condensation of 5-amino-6-(D-ribitylamino)uracil with 3,4-dihydroxy-2-butanone 4-phosphate. This is the penultimate step in the biosynthesis of riboflavin. The polypeptide is 6,7-dimethyl-8-ribityllumazine synthase (Mycolicibacterium gilvum (strain PYR-GCK) (Mycobacterium gilvum (strain PYR-GCK))).